A 367-amino-acid polypeptide reads, in one-letter code: DNA replication and repair protein RecF (367 aa).

Position 30–37 (30–37 (GANGSGKT)) interacts with ATP.

It belongs to the RecF family.

It localises to the cytoplasm. In terms of biological role, the RecF protein is involved in DNA metabolism; it is required for DNA replication and normal SOS inducibility. RecF binds preferentially to single-stranded, linear DNA. It also seems to bind ATP. The polypeptide is DNA replication and repair protein RecF (Pseudomonas fluorescens (strain SBW25)).